An 872-amino-acid chain; its full sequence is DNA mismatch repair protein MutS (872 aa).

Position 602 to 609 (602 to 609) interacts with ATP; sequence GPNMSGKS.

The protein belongs to the DNA mismatch repair MutS family.

This protein is involved in the repair of mismatches in DNA. It is possible that it carries out the mismatch recognition step. This protein has a weak ATPase activity. In Staphylococcus aureus (strain bovine RF122 / ET3-1), this protein is DNA mismatch repair protein MutS.